The sequence spans 306 residues: Tricarboxylate transporter FUM11 (306 aa).

Solcar repeat units follow at residues 18 to 98 (SDTL…YQKL), 109 to 195 (FGIL…LKQV), and 206 to 292 (IGTV…VVEG). 6 consecutive transmembrane segments (helical) span residues 24–44 (LVAG…AEFA), 67–87 (GLQW…KTSI), 113–133 (LAGF…SERI), 170–189 (GFWP…LGSY), 209–229 (VKTF…TQPL), and 267–286 (GAVA…FMVY).

The protein belongs to the mitochondrial carrier (TC 2.A.29) family.

The protein localises to the mitochondrion inner membrane. It participates in mycotoxin biosynthesis. In terms of biological role, tricarboxylate transporter; part of the gene cluster that mediates the biosynthesis of fumonisins B1 (FB1), B2 (FB2), B3 (FB3), and B4 (FB4), which are carcinogenic mycotoxins. Within the pathway, FUM11 is involved the addition of the tricarballylic moieties to the carbon backbone. FUM11 makes a tricarboxylic acid precursor available for fumonisin biosynthesis via its export from the mitochondria. The biosynthesis starts with the FUM1-catalyzed carbon chain assembly from one molecule of acetyl-CoA, eight molecules of malonyl-CoA, and two molecules of methionine (in S-adenosyl form). The C18 polyketide chain is released from the enzyme by a nucleophilic attack of a carbanion, which is derived from R-carbon of alanine by decarboxylation, on the carbonyl carbon of polyketide acyl chain. This step is catalyzed by the pyridoxal 5'-phosphate-dependent aminoacyl transferase FUM8. The resultant 3-keto intermediate is then stereospecifically reduced to a 3-hydroxyl product by reductase FUM13. Subsequent oxidations at C-10 by the cytochrome P450 monooxygenase FUM2, C-14 and C-15 by FUM6, FUM12 or FUM15, tricarballylic esterification of the hydroxyl groups on C-14 and C-15 by acyltransferase FUM14, and C-5 hydroxylation by 2-keto-glutarate-dependent dioxygenase FUM3 furnish the biosynthesis of fumonisins. The tricarballylic moieties are most likely derived from the citric acid cycle, and their addition to the carbon backbone may involve FUM7, FUM10, FUM11 and FUM14. In Gibberella moniliformis (strain M3125 / FGSC 7600) (Maize ear and stalk rot fungus), this protein is Tricarboxylate transporter FUM11.